Consider the following 580-residue polypeptide: Arginine--tRNA ligase (580 aa).

A 'HIGH' region motif is present at residues alanine 131–histidine 141.

Belongs to the class-I aminoacyl-tRNA synthetase family. In terms of assembly, monomer.

The protein resides in the cytoplasm. It catalyses the reaction tRNA(Arg) + L-arginine + ATP = L-arginyl-tRNA(Arg) + AMP + diphosphate. This is Arginine--tRNA ligase from Cereibacter sphaeroides (strain ATCC 17023 / DSM 158 / JCM 6121 / CCUG 31486 / LMG 2827 / NBRC 12203 / NCIMB 8253 / ATH 2.4.1.) (Rhodobacter sphaeroides).